Consider the following 918-residue polypeptide: Cell cycle and apoptosis regulator protein 2 (918 aa).

A disordered region spans residues 1 to 35 (MSQFKRQRINPLPGGRNFSGTASTSLLGPPPGLLT). Thr35 is modified (phosphothreonine). At Lys112 the chain carries N6-acetyllysine; by KAT8. Lys123 carries the N6-methyllysine modification. Position 124 is a phosphoserine (Ser124). Disordered regions lie at residues 179–219 (NRFP…KPRH), 446–510 (KAAE…PAVI), and 568–637 (VSPP…ASED). The residue at position 180 (Arg180) is an Omega-N-methylarginine. The residue at position 215 (Lys215) is an N6-acetyllysine; by KAT8. Low complexity-rich tracts occupy residues 447–468 (AAEAAPPTQEAPGETEPTEQAP) and 482–492 (AETPEATTQQE). The residue at position 454 (Thr454) is a Phosphothreonine; by ATM, ATR and CK2. Phosphothreonine is present on Thr484. Phosphoserine is present on Ser569. Basic and acidic residues predominate over residues 572 to 597 (EPEKEEAAKEEEAIKEEVVKEPKDEA). A Glycyl lysine isopeptide (Lys-Gly) (interchain with G-Cter in SUMO2 and SUMO3); alternate cross-link involves residue Lys586. Lys586 is covalently cross-linked (Glycyl lysine isopeptide (Lys-Gly) (interchain with G-Cter in SUMO2); alternate). An interaction with MCC region spans residues 605 to 665 (ESEAPLKEDG…EEFAGAKLED (61 aa)). Phosphoserine occurs at positions 622, 670, 673, 676, 682, and 803. An interaction with NR1D1 region spans residues 699–918 (DCLLAFVFFD…VEKEEPAPSN (220 aa)). A coiled-coil region spans residues 824–904 (LENRIHTLEL…QLEIQRVVEK (81 aa)). Thr892 carries the phosphothreonine modification.

As to quaternary structure, component of the DBIRD complex. Interacts with ZNF326/ZIRD; the interaction is direct. Interacts (via N-terminus) with SIRT1, which inhibits the deacetylation of substrates. Interacts (via N-terminus) with SUV39H1; this interaction abolishes the interaction with SIRT1. Component of a nuclear receptor-mediated transcription complex composed of at least ZNF335, CCAR2 and EMSY; the complex stimulates the transcription of nuclear receptor target genes such as SOX9 and HOXA1. Within the complex interacts with EMSY and interacts with ZNF335 (via C-terminus). Components of this complex may associate with components of a histone methylation complex to form a complex at least composed of ZNF335, HCFC1, CCAR2, EMSY, MKI67, RBBP5, ASH2L and WDR5. Within this complex, interacts with ASH2L. Interacts with NR1D1. Interacts (via N-terminus) with ESR1 and ESR2. Interacts (via N-terminus) with HDAC3 (via C-terminus). Interacts with HDAC1 and MED2F. Interacts with MCC. Interacts (via N-terminus) with NR1H2 and NR1H3 in a ligand-independent manner. Interacts with CSNK2A1. Interacts (via N-terminus) with p53/TP53. Interacts (via N-terminus) with BRCA1 (via the BRCT domains). Interacts (via N-terminus) with CHEK2 (via protein kinase domain). Interacts with PSEM3. Interacts (via N-terminus) with PSIA3 and SENP1. The sumoylated form shows a preferential interaction with SIRT1 as compared to its unmodified form. Interacts with CECR2; may form part of the CERF-1 and/or CEF-5 ISWI chromatin remodeling complexes in embryonic stem cells. ATM/ATR-mediated phosphorylation at Thr-454 upon DNA damage promotes binding to SIRT1. Phosphorylation at Thr-454 promotes its sumoylation by switching the binding partner of CCAR2 from SENP1 to PIAS3. In terms of processing, acetylation at Lys-112 and Lys-215 by KAT8 prevents inhibitory binding to SIRT1 and increases its deacetylase activity. Post-translationally, genotoxic stress induces its sumoylation and sumoylation promotes the SIRT1-CCAR2 interaction which in turn inhibits SIRT1-mediated deacetylation of p53/TP53. Sumoylation leads to transcriptional activation of p53/TP53 by sequestering SIRT1 from p53/TP53. Desumoylated by SENP1.

It localises to the nucleus. It is found in the cytoplasm. The protein resides in the cytoskeleton. The protein localises to the spindle. Its function is as follows. Core component of the DBIRD complex, a multiprotein complex that acts at the interface between core mRNP particles and RNA polymerase II (RNAPII) and integrates transcript elongation with the regulation of alternative splicing: the DBIRD complex affects local transcript elongation rates and alternative splicing of a large set of exons embedded in (A + T)-rich DNA regions. Inhibits SIRT1 deacetylase activity leading to increasing levels of p53/TP53 acetylation and p53-mediated apoptosis. Inhibits SUV39H1 methyltransferase activity. Mediates ligand-dependent transcriptional activation by nuclear hormone receptors. Plays a critical role in maintaining genomic stability and cellular integrity following UV-induced genotoxic stress. Regulates the circadian expression of the core clock components NR1D1 and BMAL1. Enhances the transcriptional repressor activity of NR1D1 through stabilization of NR1D1 protein levels by preventing its ubiquitination and subsequent degradation. Represses the ligand-dependent transcriptional activation function of ESR2. Acts as a regulator of PCK1 expression and gluconeogenesis by a mechanism that involves, at least in part, both NR1D1 and SIRT1. Negatively regulates the deacetylase activity of HDAC3 and can alter its subcellular localization. Positively regulates the beta-catenin pathway (canonical Wnt signaling pathway) and is required for MCC-mediated repression of the beta-catenin pathway. Represses ligand-dependent transcriptional activation function of NR1H2 and NR1H3 and inhibits the interaction of SIRT1 with NR1H3. Plays an important role in tumor suppression through p53/TP53 regulation; stabilizes p53/TP53 by affecting its interaction with ubiquitin ligase MDM2. Represses the transcriptional activator activity of BRCA1. Inhibits SIRT1 in a CHEK2 and PSEM3-dependent manner and inhibits the activity of CHEK2 in vitro. The chain is Cell cycle and apoptosis regulator protein 2 (CCAR2) from Pongo abelii (Sumatran orangutan).